A 346-amino-acid polypeptide reads, in one-letter code: SSTHKIPNVMLLAHLTPGSRKDTEPLFKSLLTSPPAEKLVLTRFLPLQFVTLSVHDAENMRLKVKLVSGRAYYLQLCTSACKQDTLFSQWVALISLLNQEKAKVSKVSEVSSLSGITNSTDVTGSTDVMDITAFTAILTPYMYAGRGPEHVRDSIDFSEFTDITDITDVTDLPENEVPEVPDIRIVTEVIEVREATEVTDHSDITNCSGVTVVFENNDLIRAKQEEKEKLKNILKPGCLQDTKSKSELKESSKHVTISNITLTFEGKRYFQTTLTPVESEANTSKEMENKTSEEKTPDFQSTALEAEESRSLRTESNTSGNECEERKVKQKKTKLVEKHVRQPKDF.

A disordered region spans residues 275-346 (TPVESEANTS…EKHVRQPKDF (72 aa)). Composition is skewed to basic and acidic residues over residues 283-297 (TSKEMENKTSEEKTP) and 334-346 (KLVEKHVRQPKDF).

It belongs to the GARIN family. In terms of assembly, interacts with CALM1.

It localises to the cell projection. The protein localises to the cilium. Its subcellular location is the flagellum. Its function is as follows. Seems to play a role in sperm motility. The protein is Golgi-associated RAB2 interactor protein 2 (GARIN2) of Macaca fascicularis (Crab-eating macaque).